A 330-amino-acid polypeptide reads, in one-letter code: Probable ADP,ATP carrier protein At5g56450 (330 aa).

The span at 1-10 (MCISKEDEED) shows a compositional bias: acidic residues. Residues 1–22 (MCISKEDEEDPSRNRRNQSPLS) are disordered. The next 6 helical transmembrane spans lie at 27-61 (LKHFQKDLLAGAVMGGVVHTIVAPIERAKLLLQTQ), 103-127 (GSSVLRYYPSVALNFSLKDLYRSIL), 137-171 (IFSGALANFMAGSAAGCTALIVVYPLDIAHTRLAA), 203-230 (GLPASLHGVIIHRGLYFGGFDTVKEIFS), 236-270 (ELALWKRWGLAQAVTTSAGLASYPLDTVRRRIMMQ), and 300-325 (GALSNMFRSTGSAAILVFYDEVKRFL). Solcar repeat units lie at residues 28-126 (KHFQ…YRSI), 139-228 (SGAL…VKEI), and 241-324 (KRWG…VKRF). Residues Arg108 and Lys120 each coordinate ADP. Arg264 contacts ADP. A Substrate recognition motif is present at residues 264–269 (RRRIMM).

It belongs to the mitochondrial carrier (TC 2.A.29) family. As to quaternary structure, monomer.

The protein resides in the membrane. It carries out the reaction ADP(in) + ATP(out) = ADP(out) + ATP(in). Its function is as follows. ADP:ATP antiporter that catalyzes the exchange of ADP and ATP across the membrane. The protein is Probable ADP,ATP carrier protein At5g56450 of Arabidopsis thaliana (Mouse-ear cress).